The following is a 424-amino-acid chain: Omega-6 fatty acid desaturase, chloroplastic (424 aa).

Residues 1-63 constitute a chloroplast transit peptide; it reads MACTLADSLL…TRNKVTVIHA (63 aa). N-acetylvaline is present on Val64. Positions 165 to 169 match the Histidine box-1 motif; that stretch reads HDCAH. The short motif at 201 to 205 is the Histidine box-2 element; sequence HDRHH. Positions 361 to 365 match the Histidine box-3 motif; sequence HIPHH.

Belongs to the fatty acid desaturase type 1 family.

The protein localises to the plastid. The protein resides in the chloroplast membrane. The enzyme catalyses a (9Z)-octadecenoyl-containing glycerolipid + 2 reduced [2Fe-2S]-[ferredoxin] + O2 + 2 H(+) = a (9Z,12Z)-octadecadienoyl-containing glycerolipid + 2 oxidized [2Fe-2S]-[ferredoxin] + 2 H2O. Its pathway is lipid metabolism; polyunsaturated fatty acid biosynthesis. Chloroplast omega-6 fatty acid desaturase introduces the second double bond in the biosynthesis of 16:3 and 18:3 fatty acids, important constituents of plant membranes. It is thought to use ferredoxin as an electron donor and to act on fatty acids esterified to galactolipids, sulfolipids and phosphatidylglycerol. This chain is Omega-6 fatty acid desaturase, chloroplastic, found in Glycine max (Soybean).